The following is a 24-amino-acid chain: Caerulein precursor fragment BM1 (24 aa).

As to expression, expressed by the skin glands.

Its subcellular location is the secreted. Antimicrobial peptide. This Xenopus boumbaensis (Mawa clawed frog) protein is Caerulein precursor fragment BM1.